We begin with the raw amino-acid sequence, 225 residues long: Thaumatin-like protein (225 aa).

Positions 1-24 are cleaved as a signal peptide; sequence MSTFKSLSLSALLFIAFLFTCARG. Intrachain disulfides connect Cys-33/Cys-224, Cys-74/Cys-84, Cys-89/Cys-95, Cys-140/Cys-213, Cys-146/Cys-196, Cys-154/Cys-164, Cys-168/Cys-177, and Cys-178/Cys-183.

This sequence belongs to the thaumatin family. N-glycosylated.

The protein localises to the secreted. Has antifungal activity against B.cinerea, C.comatus, M.arachidicola, P.piricola, C.albicans and S.carlsbergensis. Inhibits HIV-1 reverse transcriptase. The sequence is that of Thaumatin-like protein from Actinidia chinensis var. chinensis (Chinese soft-hair kiwi).